The primary structure comprises 119 residues: Dihydroneopterin aldolase (119 aa).

Substrate contacts are provided by residues E21, Y53, and 72 to 73 (IE). The Proton donor/acceptor role is filled by K99.

This sequence belongs to the DHNA family.

It carries out the reaction 7,8-dihydroneopterin = 6-hydroxymethyl-7,8-dihydropterin + glycolaldehyde. Its pathway is cofactor biosynthesis; tetrahydrofolate biosynthesis; 2-amino-4-hydroxy-6-hydroxymethyl-7,8-dihydropteridine diphosphate from 7,8-dihydroneopterin triphosphate: step 3/4. Catalyzes the conversion of 7,8-dihydroneopterin to 6-hydroxymethyl-7,8-dihydropterin. This chain is Dihydroneopterin aldolase (folB), found in Streptococcus pyogenes serotype M6 (strain ATCC BAA-946 / MGAS10394).